Consider the following 472-residue polypeptide: Riboflavin transporter RibJ (472 aa).

Residues 1–11 (MLPCFTRKPVD) lie on the Cytoplasmic side of the membrane. A helical membrane pass occupies residues 12–32 (HPLGFLVALSGLLMQLMSYGI). The Extracellular portion of the chain corresponds to 33–58 (DNSYSIFSDDMHKDPSLGYPSVTTIS). A helical membrane pass occupies residues 59–79 (LGNSVSLGLSPAFGVLCGFLV). The Cytoplasmic portion of the chain corresponds to 80–85 (DRVPPR). The chain crosses the membrane as a helical span at residues 86–106 (LMMAVSTLMLFAGLWLSSTFA). At 107–108 (HN) the chain is on the extracellular side. Asn-108 carries an N-linked (GlcNAc...) asparagine glycan. The chain crosses the membrane as a helical span at residues 109 to 129 (VTAVTFSYCLLASISSACMLS). At 130–144 (PGAAATSSWFNRYQG) the chain is on the cytoplasmic side. Residues 145-165 (LAMGINFSGGGVGSAIIPSLA) traverse the membrane as a helical segment. Residues 166–179 (GKWVVAYGWRKTFR) are Extracellular-facing. The chain crosses the membrane as a helical span at residues 180 to 196 (LMSAFCAIGVVATLLSA). Residues 197-271 (RRAPPKKEEA…TMFSRAFLGN (75 aa)) lie on the Cytoplasmic side of the membrane. The interval 200-248 (PPKKEEAGPSEYDEGQERQEQGEEEQAHTDEENRNNNNSNGETTPARRG) is disordered. The segment covering 214–233 (GQERQEQGEEEQAHTDEENR) has biased composition (basic and acidic residues). A helical transmembrane segment spans residues 272–292 (FFCWLIFSWAFYSLIYVAVPY). Residues 293 to 315 (VSSMGKAGTVYADISPIPTDIAS) lie on the Extracellular side of the membrane. Residues 316-336 (TLFTFYGVFQIVGSILVGWLA) form a helical membrane-spanning segment. Topologically, residues 337–341 (TGTTN) are cytoplasmic. A helical membrane pass occupies residues 342–362 (EFAYVLCATIGGIFCAFLGFC). The Extracellular portion of the chain corresponds to 363–365 (RSY). Residues 366–386 (VAFALLLCVIGFCMAGMFAVM) form a helical membrane-spanning segment. Residues 387–399 (PALIAERLYGPNL) lie on the Cytoplasmic side of the membrane. The chain crosses the membrane as a helical span at residues 400-420 (GFYMGAVFLAGVVGGFSAPPI). Residues 421 to 434 (QAELQQRHYGNYTY) are Extracellular-facing. Asn-431 is a glycosylation site (N-linked (GlcNAc...) asparagine). The chain crosses the membrane as a helical span at residues 435–455 (VCVFMSACMTLAAAVCYITMW). Over 456–472 (RDKRVRIVSAAAEAKLA) the chain is Cytoplasmic.

The protein belongs to the major facilitator superfamily. RibJ family.

It localises to the cell membrane. Transporter involved in riboflavin (vitamin B2) uptake. Also transports FMN and FAD. The polypeptide is Riboflavin transporter RibJ (Trypanosoma cruzi (strain CL Brener)).